Here is a 253-residue protein sequence, read N- to C-terminus: Uridylate kinase (253 aa).

An ATP-binding site is contributed by 9–12 (KLSG). Glycine 51 is a binding site for UMP. ATP contacts are provided by glycine 52 and arginine 56. UMP contacts are provided by residues aspartate 72 and 133–140 (SGNPFFTT). 3 residues coordinate ATP: threonine 160, tyrosine 166, and aspartate 169.

Belongs to the UMP kinase family. As to quaternary structure, homohexamer.

It localises to the cytoplasm. It carries out the reaction UMP + ATP = UDP + ADP. It functions in the pathway pyrimidine metabolism; CTP biosynthesis via de novo pathway; UDP from UMP (UMPK route): step 1/1. Its activity is regulated as follows. Inhibited by UTP. In terms of biological role, catalyzes the reversible phosphorylation of UMP to UDP. This Synechococcus sp. (strain JA-2-3B'a(2-13)) (Cyanobacteria bacterium Yellowstone B-Prime) protein is Uridylate kinase.